The chain runs to 573 residues: FAD-dependent monooxygenase resA (573 aa).

Residues 1–17 (MYDVIVIGAGWCGLVAA) form the signal peptide. Isoleucine 106 provides a ligand contact to FAD. Residue asparagine 235 is glycosylated (N-linked (GlcNAc...) asparagine).

This sequence belongs to the FAD-binding monooxygenase family. It depends on FAD as a cofactor.

Its pathway is antifungal biosynthesis. Its function is as follows. FAD-dependent monooxygenase; part of the gene cluster that mediates the biosynthesis of the tetrahydropyranyl antifungal agent restricticin that acts as an inhibitor of CYP51 and blocks the ergosterol biosynthesis. The highly reducing polyketide synthase resH, the short chain dehydrogenase resG, the cyclase resF, the FAD-dependent monooxygenase resA and the enoylreductase resD are required to generate the first stable intermediate desmethylrestrictinol. ResH with resD biosynthesize the first polyketide chain intermediate that is reduced by resG, followed by epoxidation by resA before 6-endo cyclization via epoxide opening by resF leads to desmethylrestrictinol. The methyltransferase resE then catalyzes the C4 O-methylation of desmethylrestrictinol to produce restrictinol, and the nonribosomal peptide synthetase resC catalyzes the C3 esterification of restrictinol with glycine that leads to restricticin. This is FAD-dependent monooxygenase resA from Aspergillus sclerotiorum.